Reading from the N-terminus, the 347-residue chain is Transcription factor JunD (347 aa).

The disordered stretch occupies residues 1-43 (METPFYGDEALSGLGGGASGSGGSFASPGRLFPGAPPTAAAGS). Positions 13-23 (GLGGGASGSGG) are enriched in gly residues. The Menin-binding motif (MBM) signature appears at 27 to 39 (SPGRLFPGAPPTA). The short motif at 46-55 (KKDALTLSLS) is the MAP kinase docking motif; essential for its phosphorylation element. The segment at 62 to 86 (LKPAAAPPPTPLRADGAPSAAPPDG) is disordered. Residues 73-86 (LRADGAPSAAPPDG) are compositionally biased toward low complexity. Phosphoserine is present on Ser90. Residue Ser100 is modified to Phosphoserine; by MAPK8. Residue Thr117 is modified to Phosphothreonine. The segment at 244-264 (QTVPDVPSFGESPPLSPIDMD) is disordered. Phosphoserine is present on residues Ser251, Ser255, and Ser259. A basic motif region spans residues 268-295 (RIKAERKRLRNRIAASKCRKRKLERISR). In terms of domain architecture, bZIP spans 268–331 (RIKAERKRLR…AQLKQKVLSH (64 aa)). The interval 296-324 (LEEKVKTLKSQNTELASTASLLREQVAQL) is leucine-zipper.

Belongs to the bZIP family. Jun subfamily. In terms of assembly, heterodimer; binds DNA as a heterodimer. Component of an AP-1 transcription factor complex composed of JUN-FOS heterodimers. As part of the AP-1 transcription factor complex, forms heterodimers with FOS proteins, thereby binding to the AP-1 consensus sequence and stimulating transcription. Forms heterodimers with FOSB; thereby binding to the AP-1 consensus sequence. Interacts (via MBM motif) with MEN1; this interaction represses transcriptional activation. Interacts with MAPK10; this interaction is inhibited in the presence of MEN1. Phosphorylated by MAP kinases MAPK8 and MAPK10; phosphorylation is inhibited in the presence of MEN1.

Its subcellular location is the nucleus. In terms of biological role, transcription factor binding AP-1 sites. Heterodimerizes with proteins of the FOS family to form an AP-1 transcription factor complex, thereby enhancing their DNA binding activity to an AP-1 consensus sequence 3'-TGA[GC]TCA-5' and enhancing their transcriptional activity. The sequence is that of Transcription factor JunD (JUND) from Homo sapiens (Human).